The chain runs to 234 residues: Short neuropeptide F (234 aa).

An N-terminal signal peptide occupies residues Met1 to Ser22. Positions Glu23–Lys56 are excised as a propeptide. 2 positions are modified to phenylalanine amide: Phe69 and Phe101. Position 132 is a tryptophan amide (Trp132). Phe165 bears the Phenylalanine amide mark. The segment covering Thr181–Asn190 has biased composition (polar residues). Residues Thr181–Lys234 form a disordered region. Residue Trp204 is modified to Tryptophan amide. Positions Ser207–Lys234 are excised as a propeptide.

Belongs to the NPY family. As to expression, expressed in all body parts of larva, pupae and adults.

The protein localises to the secreted. Functionally, plays a role in controlling food intake and regulating body size. This is Short neuropeptide F from Anopheles gambiae (African malaria mosquito).